Reading from the N-terminus, the 624-residue chain is FAD-dependent monooxygenase apdD (624 aa).

2 residues coordinate FAD: Glu73 and Asp359.

This sequence belongs to the paxM FAD-dependent monooxygenase family. Requires FAD as cofactor.

It participates in secondary metabolite biosynthesis. FAD-dependent monooxygenase; part of the gene cluster that mediates the biosynthesis of aspyridones. The polyketide-amino acid backbone preaspyridone A is first assembled by the PKS-NRPS hybrid apdA. The assembly of preaspyridone A is initiated by loading of malonyl-CoA onto apdA, followed by decarboxylation to yield the acetyl starter unit. The growing polyketide chain then elongates into a tetraketide. The adpA PKS module catalyzes three Claisen condensations, as well as beta-keto processing and methylation. Alpha-methylation step during polyketide synthesis is a prerequisite and a key checkpoint for chain transfer between PKS and NRPS modules. The downstream NRPS module contains the condensation (C), adenylation (A), and thiolation (T) domains and catalyzes the incorporation of tyrosine via the formation of the L-tyrosinyl-thioester and the amide linkage between L-tyrosinyl-thioester and the tetraketide. The bimodular assembly line is terminated with a reductase (R) domain that facilitates formation and release of the tetramic acid product. Because apdA lacks a designated enoylreductase (ER) domain, the required activity is provided the enoyl reductase apdC. ApdC appears to operate with different stereoselectivity in different PKS cycle. Combined with apdC, apdA is proposed to synthesize preaspyridone A via about 20 enzymatic steps. A number of oxidative steps performed successively by the cytochrome P450 monooxygenases apdE and apdB are required for the conversion of preaspyridone A to aspyridone A. The cytochrome P450 monooxygenase apdE is responsible for the oxidative dephenylation of preaspyridone A. Finally, the predicted FAD-dependent monooxygenase apdD and the acyl-CoA dehydrogenase apdG may be involved in the transformation of aspyridone A into aspyridone B. In Emericella nidulans (strain FGSC A4 / ATCC 38163 / CBS 112.46 / NRRL 194 / M139) (Aspergillus nidulans), this protein is FAD-dependent monooxygenase apdD.